We begin with the raw amino-acid sequence, 683 residues long: DNA ligase (683 aa).

NAD(+)-binding positions include 29–33 (DAEFD), 79–80 (SL), and Glu-109. Residue Lys-111 is the N6-AMP-lysine intermediate of the active site. NAD(+)-binding residues include Arg-132, Glu-172, Lys-288, and Lys-312. The Zn(2+) site is built by Cys-406, Cys-409, Cys-425, and Cys-431. Positions 595 to 683 (SVPRTLAGVT…GPPAEAGEPT (89 aa)) constitute a BRCT domain.

This sequence belongs to the NAD-dependent DNA ligase family. LigA subfamily. The cofactor is Mg(2+). Mn(2+) serves as cofactor.

It carries out the reaction NAD(+) + (deoxyribonucleotide)n-3'-hydroxyl + 5'-phospho-(deoxyribonucleotide)m = (deoxyribonucleotide)n+m + AMP + beta-nicotinamide D-nucleotide.. DNA ligase that catalyzes the formation of phosphodiester linkages between 5'-phosphoryl and 3'-hydroxyl groups in double-stranded DNA using NAD as a coenzyme and as the energy source for the reaction. It is essential for DNA replication and repair of damaged DNA. The chain is DNA ligase from Mycobacterium ulcerans (strain Agy99).